A 120-amino-acid polypeptide reads, in one-letter code: Peptidyl-tRNA hydrolase (120 aa).

Belongs to the PTH2 family. Homodimer.

Its subcellular location is the cytoplasm. It catalyses the reaction an N-acyl-L-alpha-aminoacyl-tRNA + H2O = an N-acyl-L-amino acid + a tRNA + H(+). In terms of biological role, the natural substrate for this enzyme may be peptidyl-tRNAs which drop off the ribosome during protein synthesis. The protein is Peptidyl-tRNA hydrolase of Saccharolobus solfataricus (strain ATCC 35092 / DSM 1617 / JCM 11322 / P2) (Sulfolobus solfataricus).